We begin with the raw amino-acid sequence, 94 residues long: Large ribosomal subunit protein eL43B (94 aa).

The C4-type zinc-finger motif lies at 39 to 62 (CPFCGRLTVKRTAAGIWKCSGKGC).

The protein belongs to the eukaryotic ribosomal protein eL43 family. Component of the large ribosomal subunit (LSU). Mature yeast ribosomes consist of a small (40S) and a large (60S) subunit. The 40S small subunit contains 1 molecule of ribosomal RNA (18S rRNA) and at least 33 different proteins. The large 60S subunit contains 3 rRNA molecules (25S, 5.8S and 5S rRNA) and at least 46 different proteins.

It localises to the cytoplasm. Component of the ribosome, a large ribonucleoprotein complex responsible for the synthesis of proteins in the cell. The small ribosomal subunit (SSU) binds messenger RNAs (mRNAs) and translates the encoded message by selecting cognate aminoacyl-transfer RNA (tRNA) molecules. The large subunit (LSU) contains the ribosomal catalytic site termed the peptidyl transferase center (PTC), which catalyzes the formation of peptide bonds, thereby polymerizing the amino acids delivered by tRNAs into a polypeptide chain. The nascent polypeptides leave the ribosome through a tunnel in the LSU and interact with protein factors that function in enzymatic processing, targeting, and the membrane insertion of nascent chains at the exit of the ribosomal tunnel. The chain is Large ribosomal subunit protein eL43B (rpl4302) from Schizosaccharomyces pombe (strain 972 / ATCC 24843) (Fission yeast).